A 423-amino-acid chain; its full sequence is 26S proteasome regulatory subunit 6A-A (423 aa).

Residue 211 to 218 (GPPGTGKT) coordinates ATP.

The protein belongs to the AAA ATPase family. In terms of assembly, may form a heterodimer with a related family member.

It is found in the cytoplasm. The protein resides in the nucleus. The 26S proteasome is involved in the ATP-dependent degradation of ubiquitinated proteins. The regulatory (or ATPase) complex confers ATP dependency and substrate specificity to the 26S complex. The protein is 26S proteasome regulatory subunit 6A-A of Xenopus laevis (African clawed frog).